Consider the following 314-residue polypeptide: TPR repeat-containing protein MJ1345 (314 aa).

TPR repeat units follow at residues 12–45 (ESILWDEYFDALEKRNYEKALLLIDKILEVRESP), 46–78 (DVYVRKARILRTLGENDKALEYFDKALKLKPKY), 80–112 (LANFLKGALLVSLGKLEEAKEVFLKLCRLEKSD), 114–146 (PVKYVTAFILKKLGEYDYALKIIDKILKKYPKS), 147–180 (AIAWAEKGEILYREGKLKKSLECFDNALKINPKD), 182–214 (QSLLYKGEILFKLGRYGEALKCLKKVFERNNKD), 215–248 (IRALMYIIQILIYLGRLNQALEYTKKALKLNPDD), 249–282 (PLLYLYKGIILNKLGKYNEAIKYFDKVLEINPNI), and 284–313 (DAWNGKAIALEKLGKINEAIECYNRALDIY).

The chain is TPR repeat-containing protein MJ1345 from Methanocaldococcus jannaschii (strain ATCC 43067 / DSM 2661 / JAL-1 / JCM 10045 / NBRC 100440) (Methanococcus jannaschii).